The primary structure comprises 288 residues: Elongation factor Ts (288 aa).

Residues 79–82 (TDFV) form an involved in Mg(2+) ion dislocation from EF-Tu region.

The protein belongs to the EF-Ts family.

The protein localises to the cytoplasm. In terms of biological role, associates with the EF-Tu.GDP complex and induces the exchange of GDP to GTP. It remains bound to the aminoacyl-tRNA.EF-Tu.GTP complex up to the GTP hydrolysis stage on the ribosome. The chain is Elongation factor Ts from Ehrlichia ruminantium (strain Welgevonden).